Here is a 465-residue protein sequence, read N- to C-terminus: uncharacterized protein (465 aa).

A compositionally biased stretch (polar residues) spans 87-112 (KTSQQIDSSPPQTPTTSNGSMMTRRQ). Disordered regions lie at residues 87 to 169 (KTSQ…SYDD) and 201 to 244 (EGYI…NNIF). Over residues 113–139 (NANNAISSNNNTNTNVTNGSSSNTSLN) the composition is skewed to low complexity. Residues 141 to 157 (GDEEQEEEEEEENDEDS) are compositionally biased toward acidic residues. Residues 217–244 (NRNNNNNNINKNNNNNINNNNNNNNNIF) show a composition bias toward low complexity.

This is an uncharacterized protein from Dictyostelium discoideum (Social amoeba).